Reading from the N-terminus, the 247-residue chain is 23S rRNA (guanosine-2'-O-)-methyltransferase RlmB (247 aa).

Gly197, Ile217, and Leu226 together coordinate S-adenosyl-L-methionine.

This sequence belongs to the class IV-like SAM-binding methyltransferase superfamily. RNA methyltransferase TrmH family. RlmB subfamily.

The protein localises to the cytoplasm. The catalysed reaction is guanosine(2251) in 23S rRNA + S-adenosyl-L-methionine = 2'-O-methylguanosine(2251) in 23S rRNA + S-adenosyl-L-homocysteine + H(+). In terms of biological role, specifically methylates the ribose of guanosine 2251 in 23S rRNA. The protein is 23S rRNA (guanosine-2'-O-)-methyltransferase RlmB of Vibrio vulnificus (strain CMCP6).